The following is a 227-amino-acid chain: Cytochrome c oxidase subunit 2 (227 aa).

Over 1 to 14 the chain is Mitochondrial intermembrane; it reads MAHAAQVGLQDATS. The chain crosses the membrane as a helical span at residues 15–45; that stretch reads PIMEELIIFHDHALMIIFLICFLVLYALFLT. Topologically, residues 46–59 are mitochondrial matrix; that stretch reads LTTKLTNTSISDAQ. The chain crosses the membrane as a helical span at residues 60–87; that stretch reads EMETVWTILPAIILVLIALPSLRILYMT. The Mitochondrial intermembrane portion of the chain corresponds to 88-227; it reads DEVNDPSFTI…IFEMGPVFTL (140 aa). H161, C196, E198, C200, H204, and M207 together coordinate Cu cation. E198 is a binding site for Mg(2+).

The protein belongs to the cytochrome c oxidase subunit 2 family. In terms of assembly, component of the cytochrome c oxidase (complex IV, CIV), a multisubunit enzyme composed of 14 subunits. The complex is composed of a catalytic core of 3 subunits MT-CO1, MT-CO2 and MT-CO3, encoded in the mitochondrial DNA, and 11 supernumerary subunits COX4I, COX5A, COX5B, COX6A, COX6B, COX6C, COX7A, COX7B, COX7C, COX8 and NDUFA4, which are encoded in the nuclear genome. The complex exists as a monomer or a dimer and forms supercomplexes (SCs) in the inner mitochondrial membrane with NADH-ubiquinone oxidoreductase (complex I, CI) and ubiquinol-cytochrome c oxidoreductase (cytochrome b-c1 complex, complex III, CIII), resulting in different assemblies (supercomplex SCI(1)III(2)IV(1) and megacomplex MCI(2)III(2)IV(2)). Found in a complex with TMEM177, COA6, COX18, COX20, SCO1 and SCO2. Interacts with TMEM177 in a COX20-dependent manner. Interacts with COX20. Interacts with COX16. Cu cation serves as cofactor.

It is found in the mitochondrion inner membrane. The enzyme catalyses 4 Fe(II)-[cytochrome c] + O2 + 8 H(+)(in) = 4 Fe(III)-[cytochrome c] + 2 H2O + 4 H(+)(out). Component of the cytochrome c oxidase, the last enzyme in the mitochondrial electron transport chain which drives oxidative phosphorylation. The respiratory chain contains 3 multisubunit complexes succinate dehydrogenase (complex II, CII), ubiquinol-cytochrome c oxidoreductase (cytochrome b-c1 complex, complex III, CIII) and cytochrome c oxidase (complex IV, CIV), that cooperate to transfer electrons derived from NADH and succinate to molecular oxygen, creating an electrochemical gradient over the inner membrane that drives transmembrane transport and the ATP synthase. Cytochrome c oxidase is the component of the respiratory chain that catalyzes the reduction of oxygen to water. Electrons originating from reduced cytochrome c in the intermembrane space (IMS) are transferred via the dinuclear copper A center (CU(A)) of subunit 2 and heme A of subunit 1 to the active site in subunit 1, a binuclear center (BNC) formed by heme A3 and copper B (CU(B)). The BNC reduces molecular oxygen to 2 water molecules using 4 electrons from cytochrome c in the IMS and 4 protons from the mitochondrial matrix. The polypeptide is Cytochrome c oxidase subunit 2 (MT-CO2) (Pan paniscus (Pygmy chimpanzee)).